We begin with the raw amino-acid sequence, 389 residues long: Flagellar P-ring protein (389 aa).

The signal sequence occupies residues 1–33 (MRPLVAARRRAAACCALAACMLALAFAPAAARA).

Belongs to the FlgI family. In terms of assembly, the basal body constitutes a major portion of the flagellar organelle and consists of four rings (L,P,S, and M) mounted on a central rod.

It is found in the periplasm. Its subcellular location is the bacterial flagellum basal body. In terms of biological role, assembles around the rod to form the L-ring and probably protects the motor/basal body from shearing forces during rotation. The sequence is that of Flagellar P-ring protein from Burkholderia pseudomallei (strain K96243).